Consider the following 412-residue polypeptide: Poly-beta-1,6-N-acetyl-D-glucosamine synthase (412 aa).

4 consecutive transmembrane segments (helical) span residues 7-28 (LLFYPIFMSIYWIVGSIYYFFI), 298-320 (IASITWVYIVLCYLSFLVITANI), 332-354 (IFFFSSFTMTFINIIQFTVALFI), and 364-386 (VGLIFLSWYPTLYWVINAAVVIM).

The protein belongs to the glycosyltransferase 2 family.

Its subcellular location is the cell membrane. N-acetylglucosaminyltransferase that catalyzes the polymerization of single monomer units of UDP-N-acetylglucosamine to produce the linear homomer poly-beta-1,6-N-acetyl-D-glucosamine (PNAG, also referred to as PIA), a biofilm adhesin polysaccharide. Requires IcaD for full activity. This chain is Poly-beta-1,6-N-acetyl-D-glucosamine synthase (icaA), found in Staphylococcus epidermidis (strain ATCC 35984 / DSM 28319 / BCRC 17069 / CCUG 31568 / BM 3577 / RP62A).